The following is an 858-amino-acid chain: Ubiquitin carboxyl-terminal hydrolase 5 (858 aa).

Ala2 bears the N-acetylalanine mark. The disordered stretch occupies residues 73–98 (LRRTRRPKEEDTSAGTGDPPRKKPTR). Residue Lys113 forms a Glycyl lysine isopeptide (Lys-Gly) (interchain with G-Cter in SUMO) linkage. Phosphoserine occurs at positions 149 and 156. A UBP-type; degenerate zinc finger spans residues 175 to 283 (QVSKHAFNLK…EHLSHFGIDM (109 aa)). Cys195 and Cys816 are disulfide-bonded. Zn(2+)-binding residues include Cys199 and Cys202. Residue Trp209 coordinates substrate. Cys219 contacts Zn(2+). Residue 221-224 (RRYF) participates in substrate binding. Zn(2+) is bound at residue His232. 3 residues coordinate substrate: Tyr259, Tyr261, and Asp264. A Phosphothreonine modification is found at Thr292. Residues 326–856 (TGIRNLGNSC…LGYIYFYQRV (531 aa)) enclose the USP domain. Cys335 (nucleophile) is an active-site residue. Thr623 is subject to Phosphothreonine. UBA domains are found at residues 654–695 (MLDE…VMSH) and 722–762 (PPPE…IFSH). 3 positions are modified to phosphoserine: Ser779, Ser783, and Ser785. His818 acts as the Proton acceptor in catalysis.

It belongs to the peptidase C19 family. Homodimer. Interacts with TRIML1. In terms of processing, SUMOylated at Lys-113; SUMOylation affects the interaction with Cav3.2 channels. Ubiquitinated by SMURF1; leading to proteasomal degradation.

The protein resides in the cytoplasm. It is found in the stress granule. It localises to the nucleus. It catalyses the reaction Thiol-dependent hydrolysis of ester, thioester, amide, peptide and isopeptide bonds formed by the C-terminal Gly of ubiquitin (a 76-residue protein attached to proteins as an intracellular targeting signal).. Its function is as follows. Deubiquitinating enzyme that participates in a wide range of cellular processes by specifically cleaving isopeptide bonds between ubiquitin and substrate proteins or ubiquitin itself. Affects thereby important cellular signaling pathways such as NF-kappa-B, Wnt/beta-catenin, and cytokine production by regulating ubiquitin-dependent protein degradation. Participates in the activation of the Wnt signaling pathway by promoting FOXM1 deubiquitination and stabilization that induces the recruitment of beta-catenin to Wnt target gene promoter. Regulates the assembly and disassembly of heat-induced stress granules by mediating the hydrolysis of unanchored ubiquitin chains. Promotes lipopolysaccharide-induced apoptosis and inflammatory response by stabilizing the TXNIP protein. Affects T-cell biology by stabilizing the inhibitory receptor on T-cells PDC1. Acts as a negative regulator of autophagy by regulating ULK1 at both protein and mRNA levels. Acts also as a negative regulator of type I interferon production by simultaneously removing both 'Lys-48'-linked unanchored and 'Lys-63'-linked anchored polyubiquitin chains on the transcription factor IRF3. Modulates the stability of DNA mismatch repair protein MLH1 and counteracts the effect of the ubiquitin ligase UBR4. Upon activation by insulin, it gets phosphorylated through mTORC1-mediated phosphorylation to enhance YTHDF1 stability by removing 'Lys-11'-linked polyubiquitination. May also deubiquitinate other substrates such as the calcium channel CACNA1H. This Mus musculus (Mouse) protein is Ubiquitin carboxyl-terminal hydrolase 5 (Usp5).